The sequence spans 1256 residues: Probable splicing factor 3B subunit 3 (1256 aa).

Positions 671–696 (TKKSQSQTGQTTTTTTSTSSASSSVT) are disordered. Residues 674–696 (SQSQTGQTTTTTTSTSSASSSVT) show a composition bias toward low complexity.

This sequence belongs to the RSE1 family. In terms of assembly, identified in the spliceosome A complex; remains associated with the spliceosome throughout the splicing process. Component of the spliceosome B complex. Identified in the spliceosome C complex. Identified in the spliceosome E complex. Component of the U11/U12 snRNPs that are part of the U12-type spliceosome. Component of splicing factor SF3B complex which is composed of at least eight subunits. SF3B associates with the splicing factor SF3A and a 12S RNA unit to form the U2 small nuclear ribonucleoproteins complex (U2 snRNP).

The protein localises to the nucleus. Involved in pre-mRNA splicing as a component of the splicing factor SF3B complex, a constituent of the spliceosome. SF3B complex is required for 'A' complex assembly formed by the stable binding of U2 snRNP to the branchpoint sequence (BPS) in pre-mRNA. Sequence independent binding of SF3A/SF3B complex upstream of the branch site is essential, it may anchor U2 snRNP to the pre-mRNA. May also be involved in the assembly of the 'E' complex. Also belongs to the minor U12-dependent spliceosome, which is involved in the splicing of rare class of nuclear pre-mRNA intron. In Dictyostelium discoideum (Social amoeba), this protein is Probable splicing factor 3B subunit 3 (sf3b3).